Reading from the N-terminus, the 91-residue chain is Small membrane A-kinase anchor protein (91 aa).

A lipid anchor (N-myristoyl glycine) is attached at Gly-2.

It belongs to the small membrane AKAP family. May be palmitoylated at Cys-3.

It is found in the cell membrane. Its function is as follows. Binds to type I regulatory subunits of protein kinase A and may anchor/target them to the plasma membrane. The sequence is that of Small membrane A-kinase anchor protein from Xenopus tropicalis (Western clawed frog).